The chain runs to 738 residues: Envelope glycoprotein gp160 (738 aa).

Positions 1–21 (MCGKSLLCVASLLASAYLVYC) are cleaved as a signal peptide. Over 22–670 (TQYVTVFYGV…LTSWIKYIQY (649 aa)) the chain is Extracellular. An N-linked (GlcNAc...) asparagine; by host glycan is attached at Asn36. Residues Cys43 and Cys56 are joined by a disulfide bond. Asn69, Asn113, Asn117, Asn118, Asn132, Asn141, Asn169, Asn182, Asn197, Asn229, Asn232, Asn263, Asn269, Asn280, Asn291, Asn301, Asn356, Asn362, Asn389, Asn402, Asn439, Asn454, and Asn457 each carry an N-linked (GlcNAc...) asparagine; by host glycan. Intrachain disulfides connect Cys100-Cys205, Cys107-Cys196, Cys112-Cys153, Cys218-Cys248, and Cys228-Cys240. The V1 stretch occupies residues 112 to 152 (CNSTTNNTTTTGSTTGMSEINETSPSYSDNCTGLGKEEIVN). The V2 stretch occupies residues 153-196 (CQFYMTGLERDKKKQYNETWYSKDVVCESNNTKDGKNRCYMNHC). Positions 296-328 (CKRPGNKTVVPITLMSGLVFHSQPINTRPRQAW) are V3. Cysteines 296 and 329 form a disulfide. Cystine bridges form between Cys381–Cys438 and Cys388–Cys411. Residues 388–411 (CNMTWFLNWVENRPNQTQHNYAPC) form a V4 region. A V5 region spans residues 454–460 (NQTNITF). The fusion peptide stretch occupies residues 503–523 (GVFVLGFLGFLATAGSAMGAA). An immunosuppression region spans residues 566–582 (LQARVTAIEKYLKDQAQ). N-linked (GlcNAc...) asparagine; by host glycans are attached at residues Asn602, Asn611, and Asn627. Residues 615–636 (QEWEKQVRYLEANISQSLEQAQ) are a coiled coil. The MPER; binding to GalCer stretch occupies residues 648 to 669 (KLNSWDVFGNWFDLTSWIKYIQ). A helical transmembrane segment spans residues 671–691 (GVYIVVGVIVLRIAIYIVQLL). Residues 692–738 (SRLRKGYRPVFSSPPGYLQQIHIHTDRGQPANEGTEEDDRDDDGYDL) are Cytoplasmic-facing. A YXXV motif; contains endocytosis signal motif is present at residues 698-701 (YRPV). A disordered region spans residues 716–738 (TDRGQPANEGTEEDDRDDDGYDL). The span at 725 to 738 (GTEEDDRDDDGYDL) shows a compositional bias: acidic residues.

As to quaternary structure, the mature envelope protein (Env) consists of a homotrimer of non-covalently associated gp120-gp41 heterodimers. The resulting complex protrudes from the virus surface as a spike. There seems to be as few as 10 spikes on the average virion. Interacts with human CD4, CCR5 and CXCR4, to form a P4HB/PDI-CD4-CXCR4-gp120 complex. Gp120 also interacts with the C-type lectins CD209/DC-SIGN and CLEC4M/DC-SIGNR (collectively referred to as DC-SIGN(R)). Gp120 and gp41 interact with GalCer. The mature envelope protein (Env) consists of a homotrimer of non-covalently associated gp120-gp41 heterodimers. The resulting complex protrudes from the virus surface as a spike. There seems to be as few as 10 spikes on the average virion. Specific enzymatic cleavages in vivo yield mature proteins. Envelope glycoproteins are synthesized as an inactive precursor that is heavily N-glycosylated and processed likely by host cell furin in the Golgi to yield the mature SU and TM proteins. The cleavage site between SU and TM requires the minimal sequence [KR]-X-[KR]-R. Post-translationally, palmitoylation of the transmembrane protein and of Env polyprotein (prior to its proteolytic cleavage) is essential for their association with host cell membrane lipid rafts. Palmitoylation is therefore required for envelope trafficking to classical lipid rafts, but not for viral replication.

Its subcellular location is the virion membrane. It localises to the host cell membrane. The protein resides in the host endosome membrane. The surface protein gp120 (SU) attaches the virus to the host lymphoid cell by binding to the primary receptor CD4. This interaction induces a structural rearrangement creating a high affinity binding site for a chemokine coreceptor like CXCR4 and/or CCR5. This peculiar 2 stage receptor-interaction strategy allows gp120 to maintain the highly conserved coreceptor-binding site in a cryptic conformation, protected from neutralizing antibodies. Since CD4 also displays a binding site for the disulfide-isomerase P4HB/PDI, a P4HB/PDI-CD4-CXCR4-gp120 complex may form. In that complex, P4HB/PDI could reach and reduce gp120 disulfide bonds, causing major conformational changes in gp120. TXN, another PDI family member could also be involved in disulfide rearrangements in Env during fusion. These changes are transmitted to the transmembrane protein gp41 and are thought to activate its fusogenic potential by unmasking its fusion peptide. Its function is as follows. The surface protein gp120 is a ligand for CD209/DC-SIGN and CLEC4M/DC-SIGNR, which are respectively found on dendritic cells (DCs), and on endothelial cells of liver sinusoids and lymph node sinuses. These interactions allow capture of viral particles at mucosal surfaces by these cells and subsequent transmission to permissive cells. DCs are professional antigen presenting cells, critical for host immunity by inducing specific immune responses against a broad variety of pathogens. They act as sentinels in various tissues where they take up antigen, process it, and present it to T-cells following migration to lymphoid organs. HIV subverts the migration properties of dendritic cells to gain access to CD4+ T-cells in lymph nodes. Virus transmission to permissive T-cells occurs either in trans (without DCs infection, through viral capture and transmission), or in cis (following DCs productive infection, through the usual CD4-gp120 interaction), thereby inducing a robust infection. In trans infection, bound virions remain infectious over days and it is proposed that they are not degraded, but protected in non-lysosomal acidic organelles within the DCs close to the cell membrane thus contributing to the viral infectious potential during DCs' migration from the periphery to the lymphoid tissues. On arrival at lymphoid tissues, intact virions recycle back to DCs' cell surface allowing virus transmission to CD4+ T-cells. Virion capture also seems to lead to MHC-II-restricted viral antigen presentation, and probably to the activation of HIV-specific CD4+ cells. In terms of biological role, the transmembrane protein gp41 (TM) acts as a class I viral fusion protein. Under the current model, the protein has at least 3 conformational states: pre-fusion native state, pre-hairpin intermediate state, and post-fusion hairpin state. During fusion of viral and target intracellular membranes, the coiled coil regions (heptad repeats) assume a trimer-of-hairpins structure, positioning the fusion peptide in close proximity to the C-terminal region of the ectodomain. The formation of this structure appears to drive apposition and subsequent fusion of viral and target cell membranes. Complete fusion occurs in host cell endosomes and is dynamin-dependent, however some lipid transfer might occur at the plasma membrane. The virus undergoes clathrin-dependent internalization long before endosomal fusion, thus minimizing the surface exposure of conserved viral epitopes during fusion and reducing the efficacy of inhibitors targeting these epitopes. Membranes fusion leads to delivery of the nucleocapsid into the cytoplasm. Functionally, the envelope glycoprotein gp160 precursor down-modulates cell surface CD4 antigen by interacting with it in the endoplasmic reticulum and blocking its transport to the cell surface. The gp120-gp41 heterodimer seems to contribute to T-cell depletion during HIV-1 infection. The envelope glycoproteins expressed on the surface of infected cells induce apoptosis through an interaction with uninfected cells expressing the receptor (CD4) and the coreceptors CXCR4 or CCR5. This type of bystander killing may be obtained by at least three distinct mechanisms. First, the interaction between the 2 cells can induce cellular fusion followed by nuclear fusion within the syncytium. Syncytia are condemned to die from apoptosis. Second, the 2 interacting cells may not fuse entirely and simply exchange plasma membrane lipids, after a sort of hemifusion process, followed by rapid death. Third, it is possible that virus-infected cells, on the point of undergoing apoptosis, fuse with CD4-expressing cells, in which case apoptosis is rapidly transmitted from one cell to the other and thus occurs in a sort of contagious fashion. Its function is as follows. The gp120-gp41 heterodimer allows rapid transcytosis of the virus through CD4 negative cells such as simple epithelial monolayers of the intestinal, rectal and endocervical epithelial barriers. Both gp120 and gp41 specifically recognize glycosphingolipids galactosyl-ceramide (GalCer) or 3' sulfo-galactosyl-ceramide (GalS) present in the lipid rafts structures of epithelial cells. Binding to these alternative receptors allows the rapid transcytosis of the virus through the epithelial cells. This transcytotic vesicle-mediated transport of virions from the apical side to the basolateral side of the epithelial cells does not involve infection of the cells themselves. The chain is Envelope glycoprotein gp160 (env) from Human immunodeficiency virus type 2 subtype A (isolate Ghana-1) (HIV-2).